The primary structure comprises 87 residues: Probable Fe(2+)-trafficking protein (87 aa).

It belongs to the Fe(2+)-trafficking protein family.

Functionally, could be a mediator in iron transactions between iron acquisition and iron-requiring processes, such as synthesis and/or repair of Fe-S clusters in biosynthetic enzymes. The polypeptide is Probable Fe(2+)-trafficking protein (Francisella tularensis subsp. mediasiatica (strain FSC147)).